Consider the following 151-residue polypeptide: Large ribosomal subunit protein bL9 (151 aa).

The protein belongs to the bacterial ribosomal protein bL9 family.

Functionally, binds to the 23S rRNA. In Pseudothermotoga lettingae (strain ATCC BAA-301 / DSM 14385 / NBRC 107922 / TMO) (Thermotoga lettingae), this protein is Large ribosomal subunit protein bL9.